A 214-amino-acid polypeptide reads, in one-letter code: Thymidylate kinase (214 aa).

Gly7–Ser14 is a binding site for ATP.

It belongs to the thymidylate kinase family.

It carries out the reaction dTMP + ATP = dTDP + ADP. Phosphorylation of dTMP to form dTDP in both de novo and salvage pathways of dTTP synthesis. In Chlorobaculum tepidum (strain ATCC 49652 / DSM 12025 / NBRC 103806 / TLS) (Chlorobium tepidum), this protein is Thymidylate kinase.